The chain runs to 209 residues: Ribose 1,5-bisphosphate phosphokinase PhnN (209 aa).

ATP is bound at residue Gly27 to Asp34.

The protein belongs to the ribose 1,5-bisphosphokinase family.

It catalyses the reaction alpha-D-ribose 1,5-bisphosphate + ATP = 5-phospho-alpha-D-ribose 1-diphosphate + ADP. It participates in metabolic intermediate biosynthesis; 5-phospho-alpha-D-ribose 1-diphosphate biosynthesis; 5-phospho-alpha-D-ribose 1-diphosphate from D-ribose 5-phosphate (route II): step 3/3. Functionally, catalyzes the phosphorylation of ribose 1,5-bisphosphate to 5-phospho-D-ribosyl alpha-1-diphosphate (PRPP). This Chelativorans sp. (strain BNC1) protein is Ribose 1,5-bisphosphate phosphokinase PhnN.